The primary structure comprises 69 residues: uncharacterized protein (69 aa).

This is an uncharacterized protein from Saccharolobus islandicus (Sulfolobus islandicus).